The following is a 192-amino-acid chain: Peptide deformylase (192 aa).

Cys108 and His150 together coordinate Fe cation. Residue Glu151 is part of the active site. His154 lines the Fe cation pocket.

This sequence belongs to the polypeptide deformylase family. Requires Fe(2+) as cofactor.

It carries out the reaction N-terminal N-formyl-L-methionyl-[peptide] + H2O = N-terminal L-methionyl-[peptide] + formate. Its function is as follows. Removes the formyl group from the N-terminal Met of newly synthesized proteins. Requires at least a dipeptide for an efficient rate of reaction. N-terminal L-methionine is a prerequisite for activity but the enzyme has broad specificity at other positions. The protein is Peptide deformylase of Opitutus terrae (strain DSM 11246 / JCM 15787 / PB90-1).